The following is a 504-amino-acid chain: MEEFQVYLELNRSRRHDFLYPLIFREYIYALAHDHGLNKSMIFLENQGYVNKFSSLIVKRLIIRMDQQNHLIISANDSNQNPFFGHNNNLYSQMISAGFAVIVEIPFSLRLVSYSQGEEVAKSHNLQSIHSIFPFLEDKFSHLNYVLDVLIPHPIHLEILVQALRYWVKDASSLHLLRFSLYEYCNLKSFITPKKSISIFNPRLFFFLYNSHACEYESIFLFLRNQSSHLRSTSSGVFLERIYFYGKIEYLLEVFYNDFQNNLWLFKDPFIHFIRYQGKAILASKDTSLLMNKWKYYFVDLWQYHFYMWSQSGRVRINQLSKYSLDFLGYLSSVRLNPSVVRSQMLENSFIIDNAMKKLDTRIPIISLIGSLSKAKFCNTLGHPISKPTWADSSDSDIIDRFVRICRNLSHYHSGSSKKKSLYRIKYILRFSCVKTLARKHKNTVRAFLKRLGSEFLEEFFTETEEEHVFSLIFPRVFFTSRKLYRGRIWYLDIICINALVNHE.

This sequence belongs to the intron maturase 2 family. MatK subfamily.

The protein resides in the plastid. The protein localises to the chloroplast. Usually encoded in the trnK tRNA gene intron. Probably assists in splicing its own and other chloroplast group II introns. This chain is Maturase K, found in Adansonia digitata (Baobab tree).